The sequence spans 61 residues: Probable tautomerase spyM18_1099 (61 aa).

The active-site Proton acceptor; via imino nitrogen is P2.

The protein belongs to the 4-oxalocrotonate tautomerase family.

The chain is Probable tautomerase spyM18_1099 from Streptococcus pyogenes serotype M18 (strain MGAS8232).